The chain runs to 220 residues: Ribosomal RNA large subunit methyltransferase E (220 aa).

Gly64, Trp66, Asp92, Asp108, and Asp133 together coordinate S-adenosyl-L-methionine. Lys173 functions as the Proton acceptor in the catalytic mechanism.

The protein belongs to the class I-like SAM-binding methyltransferase superfamily. RNA methyltransferase RlmE family.

It is found in the cytoplasm. The enzyme catalyses uridine(2552) in 23S rRNA + S-adenosyl-L-methionine = 2'-O-methyluridine(2552) in 23S rRNA + S-adenosyl-L-homocysteine + H(+). Functionally, specifically methylates the uridine in position 2552 of 23S rRNA at the 2'-O position of the ribose in the fully assembled 50S ribosomal subunit. The protein is Ribosomal RNA large subunit methyltransferase E of Acidovorax sp. (strain JS42).